The sequence spans 372 residues: Glutamate 5-kinase (372 aa).

Residue K6 coordinates ATP. S46, D133, and N145 together coordinate substrate. ATP is bound by residues 165 to 166 (TD) and 207 to 213 (TGGMYTK). Residues 272–350 (NGFLFVDEGA…HDIESILGYK (79 aa)) form the PUA domain.

This sequence belongs to the glutamate 5-kinase family.

It localises to the cytoplasm. The catalysed reaction is L-glutamate + ATP = L-glutamyl 5-phosphate + ADP. It functions in the pathway amino-acid biosynthesis; L-proline biosynthesis; L-glutamate 5-semialdehyde from L-glutamate: step 1/2. Its function is as follows. Catalyzes the transfer of a phosphate group to glutamate to form L-glutamate 5-phosphate. This Caldanaerobacter subterraneus subsp. tengcongensis (strain DSM 15242 / JCM 11007 / NBRC 100824 / MB4) (Thermoanaerobacter tengcongensis) protein is Glutamate 5-kinase.